A 362-amino-acid polypeptide reads, in one-letter code: Chorismate synthase (362 aa).

Arg47 is a binding site for NADP(+). FMN-binding positions include 124-126 (RAS), Gly286, 301-305 (KPTAT), and Arg327.

Belongs to the chorismate synthase family. In terms of assembly, homotetramer. It depends on FMNH2 as a cofactor.

It carries out the reaction 5-O-(1-carboxyvinyl)-3-phosphoshikimate = chorismate + phosphate. It participates in metabolic intermediate biosynthesis; chorismate biosynthesis; chorismate from D-erythrose 4-phosphate and phosphoenolpyruvate: step 7/7. Functionally, catalyzes the anti-1,4-elimination of the C-3 phosphate and the C-6 proR hydrogen from 5-enolpyruvylshikimate-3-phosphate (EPSP) to yield chorismate, which is the branch point compound that serves as the starting substrate for the three terminal pathways of aromatic amino acid biosynthesis. This reaction introduces a second double bond into the aromatic ring system. This Prochlorococcus marinus (strain MIT 9303) protein is Chorismate synthase.